We begin with the raw amino-acid sequence, 261 residues long: 5-oxoprolinase subunit A (261 aa).

This sequence belongs to the LamB/PxpA family. In terms of assembly, forms a complex composed of PxpA, PxpB and PxpC.

The enzyme catalyses 5-oxo-L-proline + ATP + 2 H2O = L-glutamate + ADP + phosphate + H(+). Catalyzes the cleavage of 5-oxoproline to form L-glutamate coupled to the hydrolysis of ATP to ADP and inorganic phosphate. The chain is 5-oxoprolinase subunit A from Coprothermobacter proteolyticus (strain ATCC 35245 / DSM 5265 / OCM 4 / BT).